A 304-amino-acid chain; its full sequence is DCN1-like protein 3 (304 aa).

Disordered regions lie at residues 1–86 (MGQC…AEES) and 284–304 (EGEG…EEQT). Gly2 carries N-myristoyl glycine lipidation. The 193-residue stretch at 86-278 (SSLQRLEELF…LFDTFVEWEM (193 aa)) folds into the DCUN1 domain.

Part of a complex containing DCUN1D3, CUL3 and RBX1. Interacts (via the DCUN1 domain) with the unneddylated cullins: interacts with CUL1, CUL2, CUL3, CUL4A, CUL4B and CUL5; these interactions promote the cullin neddylation and the identity of the cullin dictates the affinity of the interaction. Interacts preferentially with CUL3; this interaction triggers the relocalization of CUL3 to the cell membrane where CUL3 is neddylated. Interacts (via DCUN1 domain) with RBX1. May also interact with regulators or subunits of cullin-RING ligases such as RNF7, ELOB and DDB1; these interactions are bridged by cullins. Interacts (via DCUN1 domain) with CAND1; this interaction is bridged by cullins and strongly inhibits cullin neddylation. These CAND-cullin-DCNL complexes can only be neddylated in the presence of a substrate adapter. Interacts (via DCUN1 domain) with the N-terminally acetylated form of UBE2M and UBE2F.

The protein localises to the cell membrane. Its subcellular location is the cytoplasm. It is found in the nucleus. It localises to the perinuclear region. Functionally, contributes to the neddylation of all cullins by transferring NEDD8 from N-terminally acetylated NEDD8-conjugating E2s enzyme to different cullin C-terminal domain-RBX complexes and may play a role in the cell cycle progression by regulating the SCF ubiquitin E3 ligase complex, after UV damage. At the cell membrane, can promote and as well inhibit cullins neddylation. This Pongo abelii (Sumatran orangutan) protein is DCN1-like protein 3.